The chain runs to 645 residues: Sister chromatid cohesion protein 1 (645 aa).

Disordered regions lie at residues 292–311 (FEPENVEPSRPQSPESFALE), 495–527 (QSGFAGENKENEDAEDWSDPFGSSNSSRRGQLE), and 619–645 (CPLSSPKPMGLGNTMENSTMRTPMRPV).

The protein belongs to the rad21 family. As to quaternary structure, component of the cohesin complex, composed of the smc-1 and smc-3 heterodimer attached via their hinge domain, scc-1 which links them, and scc-3. Interacts with smc-1, smc-3, scc-3 and tim-1.

It is found in the nucleus. The protein localises to the chromosome. Its subcellular location is the cytoplasm. Functionally, cleavable component of the cohesin complex involved in chromosome cohesion during cell cycle. The cohesin complex is required for the cohesion of sister chromatids after DNA replication. The cohesin complex apparently forms a large proteinaceous ring within which sister chromatids can be trapped. At metaphase-anaphase transition, this protein is cleaved and dissociates from chromatin, allowing sister chromatids to segregate. In Caenorhabditis elegans, this protein is Sister chromatid cohesion protein 1.